Here is a 134-residue protein sequence, read N- to C-terminus: Small ribosomal subunit protein uS8 (134 aa).

It belongs to the universal ribosomal protein uS8 family. Part of the 30S ribosomal subunit. Contacts proteins S5 and S12.

One of the primary rRNA binding proteins, it binds directly to 16S rRNA central domain where it helps coordinate assembly of the platform of the 30S subunit. The polypeptide is Small ribosomal subunit protein uS8 (Fervidobacterium nodosum (strain ATCC 35602 / DSM 5306 / Rt17-B1)).